A 176-amino-acid polypeptide reads, in one-letter code: Myelin basic protein (176 aa).

Basic residues predominate over residues 1 to 11; the sequence is MASQKHSRGHG. The disordered stretch occupies residues 1-176; that stretch reads MASQKHSRGH…SRSSSPMARR (176 aa). Residue alanine 2 is modified to N-acetylalanine. Serine 7 carries the phosphoserine modification. Arginine 25 and arginine 33 each carry citrulline. Serine 58 is subject to Phosphoserine. Deamidated asparagine is present on asparagine 97. Threonine 103 bears the Phosphothreonine mark. Deamidated glutamine is present on glutamine 108. Arginine 111 bears the Symmetric dimethylarginine mark. Serine 117 carries the post-translational modification Phosphoserine. The span at 134–153 shows a compositional bias: basic and acidic residues; the sequence is SLEHHKSSYKGYKDPHREGH. The segment covering 166–176 has biased composition (polar residues); sequence RSRSSSPMARR. 2 positions are modified to phosphoserine: serine 167 and serine 171. Citrulline is present on arginine 176.

This sequence belongs to the myelin basic protein family. Homodimer. Post-translationally, as in other animals, several charge isomers may be produced as a result of optional post-translational modifications, such as phosphorylation of serine or threonine residues, deamidation of glutamine or asparagine residues, citrullination and methylation of arginine residues.

It is found in the myelin membrane. In terms of biological role, is, with PLP, the most abundant protein component of the myelin membrane in the CNS. Plays a role in both the formation and stabilization of this compact multilayer arrangement of bilayers. Each splice variant and charge isomer may have a specialized function in the assembly of an optimized, biochemically functional myelin membrane. The sequence is that of Myelin basic protein (mbp) from Xenopus laevis (African clawed frog).